The primary structure comprises 345 residues: 4-hydroxyproline 2-epimerase (345 aa).

Residue glutamine 85 coordinates substrate. The active-site Proton acceptor is the serine 93. Substrate contacts are provided by residues 94 to 95 (GS) and aspartate 251. Residue cysteine 255 is the Proton donor of the active site. 256 to 257 (GT) is a binding site for substrate.

The protein belongs to the proline racemase family.

The enzyme catalyses trans-4-hydroxy-L-proline = cis-4-hydroxy-D-proline. Its function is as follows. Catalyzes the epimerization of trans-4-hydroxy-L-proline (t4LHyp) to cis-4-hydroxy-D-proline (c4DHyp). May be involved in a degradation pathway of t4LHyp. Can also catalyze the epimerization of trans-3-hydroxy-L-proline (t3LHyp) to cis-3-hydroxy-D-proline (c3DHyp) in vitro, albeit with 2-fold lower efficiency. Displays no proline racemase activity. The sequence is that of 4-hydroxyproline 2-epimerase from Rhizobium etli (strain ATCC 51251 / DSM 11541 / JCM 21823 / NBRC 15573 / CFN 42).